Here is a 378-residue protein sequence, read N- to C-terminus: Cysteine synthase (378 aa).

Residues 10 to 31 form a disordered region; it reads NSEGDSNQQQNNNNNSNNNLKE. Low complexity predominate over residues 15–28; it reads SNQQQNNNNNSNNN. Residue Lys79 is modified to N6-(pyridoxal phosphate)lysine. Residues 215-219 and Ser319 contribute to the pyridoxal 5'-phosphate site; that span reads GTGGT.

This sequence belongs to the cysteine synthase/cystathionine beta-synthase family. It depends on pyridoxal 5'-phosphate as a cofactor.

It catalyses the reaction O-acetyl-L-serine + hydrogen sulfide = L-cysteine + acetate. It functions in the pathway amino-acid biosynthesis; L-cysteine biosynthesis; L-cysteine from L-serine: step 2/2. The protein is Cysteine synthase (cysK) of Dictyostelium discoideum (Social amoeba).